The sequence spans 287 residues: Leucine-rich repeat-containing protein 72 (287 aa).

LRR repeat units lie at residues 46–67, 68–89, 90–111, and 112–133; these read DVFE…SRFK, KLKY…TRNY, CLTE…HYLP, and SLHI…VKEL. The LRRCT domain occupies 147–185; it reads NPLCQYNLYRLYIIYHLPGVELLDRNQVTEKERRSMITI.

This Homo sapiens (Human) protein is Leucine-rich repeat-containing protein 72 (LRRC72).